Here is a 366-residue protein sequence, read N- to C-terminus: G-protein coupled receptor 183 (366 aa).

At 1 to 37 (MQVMRTFNQPPTSSHPTPTLNDSDTCITLYNHRGYAR) the chain is on the extracellular side. N-linked (GlcNAc...) asparagine glycosylation occurs at N21. A helical membrane pass occupies residues 38–63 (VLMPLFYCIVFFVGLLGNALAFHIIR). The Cytoplasmic segment spans residues 64 to 83 (PNVKKINSTTLYSANLVISD). Residues 84–101 (ILFTLSLPLRIIYYALGF) traverse the membrane as a helical segment. Topologically, residues 102–111 (HWPLGETLCK) are extracellular. C110 and C188 are oxidised to a cystine. A helical transmembrane segment spans residues 112-133 (IVGLIFYINTYAGVNFMTCLSV). At 134–155 (DRFIAVVLPLRFARFRKVSNVR) the chain is on the cytoplasmic side. A helical transmembrane segment spans residues 156–174 (YICVGVWLLVLMQTLPLLS). Over 175–199 (MPMTNEEPDGFITCMEYPNFEPVPN) the chain is Extracellular. A helical transmembrane segment spans residues 200-222 (ISYILIGAVFLGYGVPVVTILVC). Residues 223-248 (YSILCCKLRLAAKANQLTDKSGRSQK) lie on the Cytoplasmic side of the membrane. Residues 249–272 (AIGVICCVSLVFVVCFSPYHIDLL) traverse the membrane as a helical segment. The Extracellular segment spans residues 273–292 (QYMIRKLIYTPDCAELTAFQ). Residues 293–317 (ISLHFTVCLMNLNSCLDPFIYFFAC) traverse the membrane as a helical segment. Over 318–366 (KGYKTKVLKILKRQVSVSFSSAARTLPEGLSRDISDGNKIHLNSTRHKE) the chain is Cytoplasmic.

Belongs to the G-protein coupled receptor 1 family.

It localises to the cell membrane. In terms of biological role, G-protein coupled receptor expressed in lymphocytes that acts as a chemotactic receptor for B-cells, T-cells, splenic dendritic cells, monocytes/macrophages and astrocytes. Receptor for oxysterol 7-alpha,25-dihydroxycholesterol (7-alpha,25-OHC) and other related oxysterols. Mediates cell positioning and movement of a number of cells by binding the 7-alpha,25-OHC ligand that forms a chemotactic gradient. Binding of 7-alpha,25-OHC mediates the correct localization of B-cells during humoral immune responses. The polypeptide is G-protein coupled receptor 183 (gpr183) (Salmo salar (Atlantic salmon)).